A 275-amino-acid chain; its full sequence is MSAPVLLIDIGNTRLKWAWCNAGEVAVQEPGRLPTPWQHSGAVTHTDDSAMNTLAAVLRNLRGEGPVPSVWITNVAGPVIAGQVDAALNAAFGDGASVQWVRSAAAHGSLVSGYREPTQLGVDRWVGSIGAHRWLPGETLLIVTAGTATTLDIVTAQPGGQGRFEGGLILPGLALMLAALARNTAQLPALDVEDTGTAAASRLPWADNTHDAIAAGCLAAQAGAIERTWRTLSERGPTRCLLSGGARHALAGALAVPFEMHDNLVLLGLHAMATA.

9 to 16 (DIGNTRLK) serves as a coordination point for ATP. Substrate is bound by residues Tyr114 and 121-124 (GVDR). Asp123 (proton acceptor) is an active-site residue. ATP is bound at residue Thr147. Thr209 is a substrate binding site.

The protein belongs to the type III pantothenate kinase family. In terms of assembly, homodimer. The cofactor is NH4(+). K(+) is required as a cofactor.

Its subcellular location is the cytoplasm. The catalysed reaction is (R)-pantothenate + ATP = (R)-4'-phosphopantothenate + ADP + H(+). It participates in cofactor biosynthesis; coenzyme A biosynthesis; CoA from (R)-pantothenate: step 1/5. Its function is as follows. Catalyzes the phosphorylation of pantothenate (Pan), the first step in CoA biosynthesis. The polypeptide is Type III pantothenate kinase (Cupriavidus pinatubonensis (strain JMP 134 / LMG 1197) (Cupriavidus necator (strain JMP 134))).